The chain runs to 745 residues: Eukaryotic translation initiation factor 3 subunit B (745 aa).

The RRM domain maps to 41 to 129 (DVIVIEGVPV…HRFSVHRFTD (89 aa)). 4 WD repeats span residues 189 to 230 (EHSR…RFMR), 251 to 293 (WSHE…RSFP), 303 to 344 (GQLK…LLEK), and 580 to 625 (GEHY…LQKH). Residues 644-745 (GKDEQKRVRK…IIEETEEVLA (102 aa)) are a coiled coil.

This sequence belongs to the eIF-3 subunit B family. Component of the eukaryotic translation initiation factor 3 (eIF-3) complex.

The protein localises to the cytoplasm. Its function is as follows. RNA-binding component of the eukaryotic translation initiation factor 3 (eIF-3) complex, which is involved in protein synthesis of a specialized repertoire of mRNAs and, together with other initiation factors, stimulates binding of mRNA and methionyl-tRNAi to the 40S ribosome. The eIF-3 complex specifically targets and initiates translation of a subset of mRNAs involved in cell proliferation. The polypeptide is Eukaryotic translation initiation factor 3 subunit B (Mycosarcoma maydis (Corn smut fungus)).